The primary structure comprises 454 residues: GA-binding protein alpha chain (454 aa).

One can recognise a PNT domain in the interval 168–251 (AALEGYRKEQ…SHLELLRKYV (84 aa)). The interval 295-316 (KVQRSPRISGEDRSSPGNRTGN) is disordered. Phosphoserine is present on Ser303. The segment at residues 320–400 (IQLWQFLLEL…QGKRFVYKFV (81 aa)) is a DNA-binding region (ETS).

Belongs to the ETS family. In terms of assembly, heterotetramer of two alpha and two beta subunits. As to expression, ubiquitous.

The protein localises to the nucleus. Transcription factor capable of interacting with purine rich repeats (GA repeats). Positively regulates transcription of transcriptional repressor Rhit/Zpf13. In Mus musculus (Mouse), this protein is GA-binding protein alpha chain (Gabpa).